The chain runs to 192 residues: Phosphoheptose isomerase (192 aa).

Residues 37–192 enclose the SIS domain; that stretch reads LADSFKAGGK…IQLIEKEMVK (156 aa). Residue 52-54 participates in substrate binding; that stretch reads NGG. Zn(2+) contacts are provided by His-61 and Glu-65. Substrate contacts are provided by residues Glu-65, 93–94, 119–121, Ser-124, and Gln-172; these read ND and STS. Zn(2+) is bound by residues Gln-172 and His-180.

The protein belongs to the SIS family. GmhA subfamily. Homotetramer. Zn(2+) is required as a cofactor.

It is found in the cytoplasm. It carries out the reaction 2 D-sedoheptulose 7-phosphate = D-glycero-alpha-D-manno-heptose 7-phosphate + D-glycero-beta-D-manno-heptose 7-phosphate. Its pathway is carbohydrate biosynthesis; D-glycero-D-manno-heptose 7-phosphate biosynthesis; D-glycero-alpha-D-manno-heptose 7-phosphate and D-glycero-beta-D-manno-heptose 7-phosphate from sedoheptulose 7-phosphate: step 1/1. Catalyzes the isomerization of sedoheptulose 7-phosphate in D-glycero-D-manno-heptose 7-phosphate. The polypeptide is Phosphoheptose isomerase (Salmonella agona (strain SL483)).